The sequence spans 617 residues: Probable endochitinase (617 aa).

The GH18 domain maps to Tyr-53 to Val-426. Cys-57 and Cys-82 are disulfide-bonded. Chitin-binding positions include Asp-109 to Trp-110 and Gly-136 to Ser-139. The Proton donor role is filled by Glu-179. Chitin is bound by residues Tyr-180 and Met-245–Asp-248. Asn-310 is a glycosylation site (N-linked (GlcNAc...) asparagine). A chitin-binding site is contributed by Trp-394. Chitin-binding type-2 domains follow at residues Thr-478–Val-534 and Ala-563–Lys-617. 2 cysteine pairs are disulfide-bonded: Cys-511–Cys-524 and Cys-594–Cys-607.

It belongs to the glycosyl hydrolase 18 family. Chitinase class II subfamily.

The enzyme catalyses Random endo-hydrolysis of N-acetyl-beta-D-glucosaminide (1-&gt;4)-beta-linkages in chitin and chitodextrins.. This chain is Probable endochitinase (cht-1), found in Caenorhabditis elegans.